Here is a 103-residue protein sequence, read N- to C-terminus: MFKKIGVVGDKDSVLAFKALGIDVFPVVGNEEAKKTVDKLAKNDYAVVFVTEHVAQGIEETIERYNKEVLPAVILIPSNQGTLNIGMQRISDNVEKAVGVNIL.

The protein belongs to the V-ATPase F subunit family.

In terms of biological role, produces ATP from ADP in the presence of a proton gradient across the membrane. This Clostridium botulinum (strain Alaska E43 / Type E3) protein is V-type ATP synthase subunit F.